Here is a 27-residue protein sequence, read N- to C-terminus: Pregnancy-associated glycoprotein 62 (27 aa).

Belongs to the peptidase A1 family. Glycosylated. Placenta.

In Capra hircus (Goat), this protein is Pregnancy-associated glycoprotein 62 (PAG62).